Reading from the N-terminus, the 144-residue chain is Large ribosomal subunit protein uL16 (144 aa).

Belongs to the universal ribosomal protein uL16 family. Part of the 50S ribosomal subunit.

Functionally, binds 23S rRNA and is also seen to make contacts with the A and possibly P site tRNAs. The sequence is that of Large ribosomal subunit protein uL16 from Thermoanaerobacter pseudethanolicus (strain ATCC 33223 / 39E) (Clostridium thermohydrosulfuricum).